We begin with the raw amino-acid sequence, 476 residues long: Eukaryotic translation initiation factor 3 subunit L (476 aa).

The 196-residue stretch at 257-452 (DAIRMFSHIL…DLDYALENDL (196 aa)) folds into the PCI domain.

The protein belongs to the eIF-3 subunit L family. Component of the eukaryotic translation initiation factor 3 (eIF-3) complex.

Its subcellular location is the cytoplasm. In terms of biological role, component of the eukaryotic translation initiation factor 3 (eIF-3) complex, which is involved in protein synthesis of a specialized repertoire of mRNAs and, together with other initiation factors, stimulates binding of mRNA and methionyl-tRNAi to the 40S ribosome. The eIF-3 complex specifically targets and initiates translation of a subset of mRNAs involved in cell proliferation. This chain is Eukaryotic translation initiation factor 3 subunit L, found in Neosartorya fischeri (strain ATCC 1020 / DSM 3700 / CBS 544.65 / FGSC A1164 / JCM 1740 / NRRL 181 / WB 181) (Aspergillus fischerianus).